We begin with the raw amino-acid sequence, 131 residues long: Methyl-coenzyme M reductase operon protein D (131 aa).

In terms of assembly, MCR is composed of three subunits: alpha, beta, and gamma. The function of proteins C and D is not known.

This chain is Methyl-coenzyme M reductase operon protein D (mcrD), found in Methanothermus fervidus.